We begin with the raw amino-acid sequence, 116 residues long: Beta-2-microglobulin (116 aa).

The signal sequence occupies residues 1-19 (MKFLLSFVVLAVFSASAFA). Residues 24–111 (PKIQVYSRNP…RHLKETKNIS (88 aa)) enclose the Ig-like C1-type domain. A disulfide bridge connects residues C44 and C99.

Belongs to the beta-2-microglobulin family. In terms of assembly, heterodimer of an alpha chain and a beta chain. Beta-2-microglobulin is the beta-chain of major histocompatibility complex class I molecules.

The protein localises to the secreted. Its function is as follows. Component of the class I major histocompatibility complex (MHC). Involved in the presentation of peptide antigens to the immune system. In Ictalurus punctatus (Channel catfish), this protein is Beta-2-microglobulin (b2m).